A 312-amino-acid polypeptide reads, in one-letter code: Tumor necrosis factor receptor type 1-associated DEATH domain protein (312 aa).

Positions 147-163 match the Nuclear export signal motif; that stretch reads LRDEELTELENALRNLT. The disordered stretch occupies residues 166–200; the sequence is SAGGQGSDVQGTPAPLQSLAPSPPEEKPPPPQPGQ. The 91-residue stretch at 215 to 305 folds into the Death domain; the sequence is NLQDQQKFAR…SLAEDLLGLA (91 aa). The segment at 222-289 is interaction with KRT14 and KRT18; that stretch reads FARSVGLKWR…ATLQRLVEAL (68 aa). The Nuclear localization signal signature appears at 231-244; sequence RKVGRSLQRSCRAL.

As to quaternary structure, stimulation of TNF-alpha receptor TNFRSF1A leads to the formation of two distinct signaling complexes. Plasma membrane-bound complex I is composed of TNFRSF1A, TRADD, RIPK1, TRAF2 and BIRC2/c-IAP1 or BIRC3 which interacts with CHUCK/IKK-alpha, IKBKB/IKK-beta and IKBKG/IKK-gamma promoting cell survival. Subsequently, TRADD, RIPK1 and TRAF2 dissociate from TNFRSF1A and form cytoplasmic complex II with FADD and caspase CASP8 promoting cell apoptosis. Within complex I, interacts with TNFRSF1A/TNFR1, TRAF2 and kinase RIPK1. Within complex I, interacts with TRPC4AP; the interaction promotes NF-kappa B activation. UXT1 associates with complex I; the interaction prevents the formation of complex II. Within complex I Interacts with scaffold protein DAB2IP. Interacts with autophagy receptor SQSTM1. Interacts with E3 ligase TRIP12. Interacts with kinase HIPK2. Interacts with keratin KRT14. Interacts with keratin KRT18. Interacts with keratins KRT16 and KRT17. Interacts with FADD. Interacts with TOMM70. Interacts with TMC8; the interaction impairs the formation of complex I and facilites complex II formation.

The protein resides in the nucleus. Its subcellular location is the cytoplasm. It localises to the cytoskeleton. Its function is as follows. Adapter molecule for TNFRSF1A/TNFR1 that specifically associates with the cytoplasmic domain of activated TNFRSF1A/TNFR1 mediating its interaction with FADD. Overexpression of TRADD leads to two major TNF-induced responses, apoptosis and activation of NF-kappa-B. The nuclear form acts as a tumor suppressor by preventing ubiquitination and degradation of isoform p19ARF/ARF of CDKN2A by TRIP12: acts by interacting with TRIP12, leading to disrupt interaction between TRIP12 and isoform p19ARF/ARF of CDKN2A. The polypeptide is Tumor necrosis factor receptor type 1-associated DEATH domain protein (Bos taurus (Bovine)).